Reading from the N-terminus, the 398-residue chain is MAQVINEMDVPSHSFVFHGTGERYFLICVVNVLLTIITLGIYLPWALMKCKRYLYANMEVNGQRFSYGITGGNVFFSCLVFVFFYFAILMTVSADMPLIGCVLTLSLLVLLIFMAAKGLRYQALMTSLNGVRFSFNCSMKGVWWVTFFLPILMAIGMGTVFFISTKMLHANSSSSVIVSVVLMAIVGIVSIGIFNGTLYSLVMSFLWSNTSFGIHRFKVKLDTAYCIKYAILAFLALLPFLAVAGYIIFDQILNAYDSSVYANDDIENLQQFMEMQRKMIIAQLIYYFGIAVSTSYLTVSLRNHFMSNLSLNDGRIRFRSTLTYHGMLYRMCALVVISGITGGLAYPLLKIWMIDWQAKNTYLLGDLDDLPLINKEEQPDKGFLASISRGIMPSLPFL.

Residues 1 to 24 (MAQVINEMDVPSHSFVFHGTGERY) are Cytoplasmic-facing. The helical transmembrane segment at 25–45 (FLICVVNVLLTIITLGIYLPW) threads the bilayer. At 46–73 (ALMKCKRYLYANMEVNGQRFSYGITGGN) the chain is on the periplasmic side. A helical transmembrane segment spans residues 74 to 94 (VFFSCLVFVFFYFAILMTVSA). Residue D95 is a topological domain, cytoplasmic. Residues 96-116 (MPLIGCVLTLSLLVLLIFMAA) form a helical membrane-spanning segment. The Periplasmic segment spans residues 117 to 142 (KGLRYQALMTSLNGVRFSFNCSMKGV). A helical transmembrane segment spans residues 143–163 (WWVTFFLPILMAIGMGTVFFI). Topologically, residues 164–175 (STKMLHANSSSS) are cytoplasmic. A helical transmembrane segment spans residues 176–196 (VIVSVVLMAIVGIVSIGIFNG). Over 197 to 228 (TLYSLVMSFLWSNTSFGIHRFKVKLDTAYCIK) the chain is Periplasmic. A helical membrane pass occupies residues 229 to 249 (YAILAFLALLPFLAVAGYIIF). Residues 250 to 278 (DQILNAYDSSVYANDDIENLQQFMEMQRK) are Cytoplasmic-facing. The helical transmembrane segment at 279 to 299 (MIIAQLIYYFGIAVSTSYLTV) threads the bilayer. Residues 300–333 (SLRNHFMSNLSLNDGRIRFRSTLTYHGMLYRMCA) lie on the Periplasmic side of the membrane. The chain crosses the membrane as a helical span at residues 334 to 354 (LVVISGITGGLAYPLLKIWMI). The Cytoplasmic portion of the chain corresponds to 355 to 398 (DWQAKNTYLLGDLDDLPLINKEEQPDKGFLASISRGIMPSLPFL).

It is found in the cell inner membrane. The protein is Inner membrane protein YjgN (yjgN) of Escherichia coli O157:H7.